Here is a 252-residue protein sequence, read N- to C-terminus: MSSVDLNADLGEGFGVWALGDDDAMLDIVTSANVACGFHAGDPATLRRVCEAAAARGVRIGAQVSYRDLAGFGRRFIDVSSEDLIADVMYQIGALSALAAAAGSSVSYVKPHGALYNAVVTNRLQAHALAAAVHAVDPALPVLGLAGSVFFGAAEELGLRTVPEAFADRAYRPDGRLVSRRERNSVLHDVDEIAERVISMVSRGRVHAVDGSTIPITVESVCVHGDSPGAVQIATAVRKRLVAEGVTLASFS.

This sequence belongs to the LamB/PxpA family. As to quaternary structure, forms a complex composed of PxpA, PxpB and PxpC.

It carries out the reaction 5-oxo-L-proline + ATP + 2 H2O = L-glutamate + ADP + phosphate + H(+). Its function is as follows. Catalyzes the cleavage of 5-oxoproline to form L-glutamate coupled to the hydrolysis of ATP to ADP and inorganic phosphate. The sequence is that of 5-oxoprolinase subunit A from Mycolicibacterium gilvum (strain PYR-GCK) (Mycobacterium gilvum (strain PYR-GCK)).